Reading from the N-terminus, the 636-residue chain is 1-phosphatidylinositol 4,5-bisphosphate phosphodiesterase zeta-1 (636 aa).

The EF-hand domain occupies 35–70; the sequence is CNTIHVKCIFKDNDRLKQGRITIEEFRTIYRIIAHR. Residues 155–299 enclose the PI-PLC X-box domain; that stretch reads QDMTHPLSDY…LKFKILVRNK (145 aa). Residues H170 and H215 contribute to the active site. The tract at residues 311–338 is disordered; sequence KGFDKHGQVQECEEEEEAEQEEEENEVR. Residues 318–345 are a coiled coil; the sequence is QVQECEEEEEAEQEEEENEVRDSEILDI. Over residues 321–336 the composition is skewed to acidic residues; sequence ECEEEEEAEQEEEENE. The PI-PLC Y-box domain occupies 375–491; that stretch reads LSDLVIYTKV…GYILKPHFLR (117 aa). Positions 491-617 constitute a C2 domain; it reads RDGKSIFNPN…KGYRRVPLFS (127 aa).

As to quaternary structure, interacts via its C2 domain with PtdIns(3)P and, to a lesser extent, PtdIns(5)P in vitro. Requires Ca(2+) as cofactor. In terms of tissue distribution, expressed specifically in testis.

Its subcellular location is the nucleus. It localises to the cytoplasm. The protein localises to the perinuclear region. It catalyses the reaction a 1,2-diacyl-sn-glycero-3-phospho-(1D-myo-inositol-4,5-bisphosphate) + H2O = 1D-myo-inositol 1,4,5-trisphosphate + a 1,2-diacyl-sn-glycerol + H(+). Its function is as follows. The production of the second messenger molecules diacylglycerol (DAG) and inositol 1,4,5-trisphosphate (IP3) is mediated by activated phosphatidylinositol-specific phospholipase C enzymes. In vitro, hydrolyzes PtdIns(4,5)P2 in a Ca(2+)-dependent manner. Triggers intracellular Ca(2+) oscillations in oocytes solely during M phase and is involved in inducing oocyte activation and initiating embryonic development up to the blastocyst stage. Is therefore a strong candidate for the egg-activating soluble sperm factor that is transferred from the sperm into the egg cytoplasm following gamete membrane fusion. May exert an inhibitory effect on phospholipase-C-coupled processes that depend on calcium ions and protein kinase C, including CFTR trafficking and function. The protein is 1-phosphatidylinositol 4,5-bisphosphate phosphodiesterase zeta-1 of Sus scrofa (Pig).